An 853-amino-acid polypeptide reads, in one-letter code: MICAL-like protein 1 (853 aa).

The region spanning 2–108 (AGPRGALLAW…YVSQYYNHFA (107 aa)) is the Calponin-homology (CH) domain. Disordered stretches follow at residues 118-162 (PRKG…TPSS) and 224-659 (SGRS…FPLI). The span at 145–162 (ECSSGSLSKQGSHRTPSS) shows a compositional bias: polar residues. In terms of domain architecture, LIM zinc-binding spans 162–224 (STCAACQQHV…AEHCARLGPS (63 aa)). Ser292 and Ser306 each carry phosphoserine. Residues Thr312 and Thr315 each carry the phosphothreonine modification. Over residues 355–366 (LSERTPAPRKDP) the composition is skewed to basic and acidic residues. The span at 381 to 394 (APLPPSSSPGPPPG) shows a compositional bias: pro residues. A Phosphoserine modification is found at Ser388. The NPF1 signature appears at 419–421 (NPF). A compositionally biased stretch (pro residues) spans 429–445 (PAAPSPAPGPAPTPPES). Thr457 and Thr459 each carry phosphothreonine. Phosphoserine is present on residues Ser460, Ser461, Ser474, and Ser476. Low complexity-rich tracts occupy residues 495–515 (PSPALSVESLSSESSSQAPSE) and 541–553 (SASLSANSSLSSS). Residues Ser568 and Ser611 each carry the phosphoserine modification. Over residues 607 to 618 (PGTSSPQLQVKS) the composition is skewed to polar residues. Residues 623–625 (NPF) carry the NPF2 motif. The interval 642-853 (KGSKPARPPA…TKSKCPGDRS (212 aa)) is mediates the interaction with RAB13 and RAB35 and intramolecular interaction with the CH domain. The bMERB domain maps to 661–808 (RKVQSDQYIP…EEEEDKMLEA (148 aa)). Residues 671–701 (EEDIHGEIDTIERQLDALEHRGVLLEEKLRG) are a coiled coil. The necessary and sufficient to associate with tubular recycling endosome membranes, mediate phosphatidic acid-binding and membrane tubulation stretch occupies residues 690 to 853 (HRGVLLEEKL…TKSKCPGDRS (164 aa)). Ser730 carries the post-translational modification Phosphoserine. The stretch at 791–820 (CLDEDRQREEEEDKMLEAMIKKKEFQKETE) forms a coiled coil.

As to quaternary structure, homooligomer. Interacts (via NPF1 motif) with EHD1 (via EH domain); the interaction is direct and probably recruits EHD1 to membranes. Interacts with EHD3 (via EH domain). Interacts with RAB35 (GTP-bound form); the interaction is direct and probably recruits MICALL1 to membranes. Interacts with ACAP2; the interaction is indirect through RAB35. Interacts with RAB8A (GTP-bound form); regulates RAB8A association with recycling endosomes. Interacts with RAB13 (GTP-bound form). Interacts with ARF6 (GTP-bound form). Interacts with PACSIN2 (via the SH3 domain). Interacts with DPYSL2.

The protein localises to the recycling endosome membrane. The protein resides in the late endosome membrane. It is found in the cell projection. It localises to the cilium membrane. Its subcellular location is the cytoplasm. The protein localises to the cytoskeleton. The protein resides in the microtubule organizing center. It is found in the centrosome. It localises to the centriole. Functionally, lipid-binding protein with higher affinity for phosphatidic acid, a lipid enriched in recycling endosome membranes. On endosome membranes, acts as a downstream effector of Rab proteins recruiting cytosolic proteins to regulate membrane tubulation. Involved in a late step of receptor-mediated endocytosis regulating for instance endocytosed-EGF receptor trafficking. Alternatively, regulates slow endocytic recycling of endocytosed proteins back to the plasma membrane. Also involved in cargo protein delivery to the plasma membrane. Plays a role in ciliogenesis coordination, recruits EHD1 to primary cilium where it is anchored to the centriole through interaction with tubulins. May indirectly play a role in neurite outgrowth. The chain is MICAL-like protein 1 (MICALL1) from Bos taurus (Bovine).